Here is a 489-residue protein sequence, read N- to C-terminus: MSFNSVLFIAELPLLLTALTAIAVMLSIAWQRNHKQVFYITVIGLNAALFSLLPASSATPVTVTPLLIVDSYSVFYSALILIGSLATVTLARAWLKKFPDNREEFYLLLSLASTGAMVMAQAHHLAAIFIGVELMSLPLFGLVGYAFRQRRSLEAAVKYMVLSASATAFLLFGIALIYAQVGSLDIATIGAQISRLPQAESAHITLLIVGLGMVVIGFGFKLSLVPFHLWTPDVYQGAPAPVTTYLATVSKIAVFAVLLRLFYTIPATDSFFYSLLGGLAFISIIIGNLLALLQSNLKRLLGFSSTAHFGYLLVALIACRLGSLSQEAVALYLVMYLLTSVGSFGVVSLMSSPYQERDADELPAYRGLFWRRPILTSAMTIMFLSLAGIPMTLGFIGKFYILAVGIQFHLWWLTGAVVFGSAVGLYYYLRVISILYLKTPGMPSRDATNDWALTTGGFMVLTSAILVVLLGIYPQPLLDLLPLAQLATP.

14 consecutive transmembrane segments (helical) span residues 6–26, 37–57, 66–86, 105–125, 127–147, 159–179, 204–224, 239–259, 271–291, 299–319, 329–349, 377–397, 408–430, and 452–472; these read VLFI…AVML, VFYI…PASS, LLIV…GSLA, FYLL…AHHL, AIFI…GYAF, YMVL…LIYA, ITLL…KLSL, PAPV…AVLL, FFYS…NLLA, RLLG…LIAC, VALY…VVSL, SAMT…GFIG, FHLW…YYLR, and ALTT…LLGI.

This sequence belongs to the complex I subunit 2 family. As to quaternary structure, NDH-1 is composed of 14 different subunits. Subunits NuoA, H, J, K, L, M, N constitute the membrane sector of the complex.

The protein resides in the cell inner membrane. It carries out the reaction a quinone + NADH + 5 H(+)(in) = a quinol + NAD(+) + 4 H(+)(out). Its function is as follows. NDH-1 shuttles electrons from NADH, via FMN and iron-sulfur (Fe-S) centers, to quinones in the respiratory chain. The immediate electron acceptor for the enzyme in this species is believed to be ubiquinone. Couples the redox reaction to proton translocation (for every two electrons transferred, four hydrogen ions are translocated across the cytoplasmic membrane), and thus conserves the redox energy in a proton gradient. In Tolumonas auensis (strain DSM 9187 / NBRC 110442 / TA 4), this protein is NADH-quinone oxidoreductase subunit N.